The chain runs to 258 residues: 5'-nucleotidase SurE (258 aa).

A divalent metal cation contacts are provided by Asp9, Asp10, Ser42, and Asn96.

It belongs to the SurE nucleotidase family. A divalent metal cation is required as a cofactor.

It is found in the cytoplasm. It carries out the reaction a ribonucleoside 5'-phosphate + H2O = a ribonucleoside + phosphate. Its function is as follows. Nucleotidase that shows phosphatase activity on nucleoside 5'-monophosphates. The chain is 5'-nucleotidase SurE from Campylobacter jejuni subsp. doylei (strain ATCC BAA-1458 / RM4099 / 269.97).